We begin with the raw amino-acid sequence, 379 residues long: ATP-sensitive inward rectifier potassium channel 10 (379 aa).

The Cytoplasmic portion of the chain corresponds to 1–61 (MTSVAKVYYS…LKDLWTTFID (61 aa)). Position 36 (arginine 36) interacts with 1,2-dioctanoyl-sn-glycero-3-phospho-(1D-myo-inositol-4,5-bisphosphate). The chain crosses the membrane as a helical span at residues 62-88 (MQWRYKLLLFSATFAGTWFLFGVVWYL). Over 89 to 114 (VAVAHGDLLELDPPANHTPCVVQVHT) the chain is Extracellular. Cysteine 108 and cysteine 140 are joined by a disulfide. Residues 115 to 131 (LTGAFLFSLESQTTIGY) constitute an intramembrane region (discontinuously helical; Pore-forming). The Selectivity filter signature appears at 128–133 (TIGYGF). The Extracellular segment spans residues 132-140 (GFRYISEEC). A helical transmembrane segment spans residues 141-166 (PLAIVLLIAQLVLTTILEIFITGTFL). Residues 167–379 (AKIARPKKRA…SALSVRISNV (213 aa)) are Cytoplasmic-facing. 1,2-dioctanoyl-sn-glycero-3-phospho-(1D-myo-inositol-4,5-bisphosphate)-binding residues include lysine 168, arginine 171, and lysine 173. Residue 210–217 (GCQVTGKL) participates in ATP binding.

The protein belongs to the inward rectifier-type potassium channel (TC 1.A.2.1) family. KCNJ10 subfamily. As to quaternary structure, homotetramer. In kidney cells, it forms heteromeric channels with Kir5.1/KCNJ16; this interaction is required for KCNJ16 localization to the basolateral membrane. Interacts with MAGI1, alone and possibly as a heteromer with KCNJ16; this interaction may facilitate KCNJ10/KCNJ16 potassium channel expression at the basolateral membrane in kidney cells. Interacts with PATJ. As to expression, expressed in kidney (at protein level). In the nephron, expressed in the distal convoluted tubule, the connecting tubule, the collecting duct and cortical thick ascending limbs.

It is found in the membrane. The protein localises to the basolateral cell membrane. The enzyme catalyses K(+)(in) = K(+)(out). With respect to regulation, channel activity is strongly regulated by variations of cytosolic pH; channels are activated by alkaline and inhibited by acidic pH values. Inhibited by Ba(2+) and Cs(+). Activated by phosphatidylinositol 4,5 biphosphate (PtdIns(4,5)P2). May be responsible for potassium buffering action of glial cells in the brain. Inward rectifier potassium channels are characterized by a greater tendency to allow potassium to flow into the cell rather than out of it. Their voltage dependence is regulated by the concentration of extracellular potassium; as external potassium is raised, the voltage range of the channel opening shifts to more positive voltages. The inward rectification is mainly due to the blockage of outward current by internal magnesium. Can be blocked by extracellular barium and cesium. In the kidney, together with KCNJ16, mediates basolateral K(+) recycling in distal tubules; this process is critical for Na(+) reabsorption at the tubules. This is ATP-sensitive inward rectifier potassium channel 10 from Homo sapiens (Human).